The sequence spans 207 residues: Ribonuclease HII (207 aa).

An RNase H type-2 domain is found at 19-207 (HCIAGVDEVG…PVKKALGIEE (189 aa)). Residues aspartate 25, glutamate 26, and aspartate 117 each coordinate a divalent metal cation.

The protein belongs to the RNase HII family. Mn(2+) serves as cofactor. Mg(2+) is required as a cofactor.

The protein resides in the cytoplasm. The catalysed reaction is Endonucleolytic cleavage to 5'-phosphomonoester.. Functionally, endonuclease that specifically degrades the RNA of RNA-DNA hybrids. This Vibrio vulnificus (strain CMCP6) protein is Ribonuclease HII.